Here is a 214-residue protein sequence, read N- to C-terminus: MEKRESSGGSGSGDAEVRKGPWTMEEDLILINYIANHGEGVWNSLAKSAGLKRTGKSCRLRWLNYLRPDVRRGNITPEEQLTIMELHAKWGNRWSKIAKHLPGRTDNEIKNFWRTKIQKYIIKSGETTTVGSQSSEFINHHATTSHVMNDTQETMDMYSPTTSYQHASNINQQLNYGNYVPESGSIMMPLSVDQSEQNYWSVDDLWPMNIYNGN.

HTH myb-type domains follow at residues 14-66 (DAEV…LNYL) and 67-121 (RPDV…QKYI). 2 consecutive DNA-binding regions (H-T-H motif) follow at residues 42 to 66 (WNSL…LNYL) and 94 to 117 (WSKI…RTKI).

Interacts (via N-terminus) with TIFY10A/JAZ1, TIFY5A/JAZ8 AND TIFY3A/JAZ11. Expressed specifically in flowers. Expressed in all four whorls of the flower and in the vascular tissue of stamen filament and sepals. Detected in male and female gametophytes, especially in microspores and ovules. Weakly expressed in petals and the upper part of pistils.

It localises to the nucleus. Functionally, transcription factor acting redundantly with MYB21 and MYB57 to control stamen filament elongation in the late developed flowers. Contributes with MYB21 to induction of MYB108 by jasmonate. Repressed at the transcript levels by DELLA proteins. In Arabidopsis thaliana (Mouse-ear cress), this protein is Transcription factor MYB24 (MYB24).